A 470-amino-acid polypeptide reads, in one-letter code: Proton-coupled amino acid transporter 3 (470 aa).

Over 1–46 the chain is Cytoplasmic; that stretch reads MSLLGRDYNSELNSLDNGPQSPSESSSSITSENVHPAGEAGLSMMQ. A compositionally biased stretch (polar residues) spans 10–20; that stretch reads SELNSLDNGPQ. Residues 10-33 are disordered; that stretch reads SELNSLDNGPQSPSESSSSITSEN. A compositionally biased stretch (low complexity) spans 21 to 31; sequence SPSESSSSITS. Residues 47–67 traverse the membrane as a helical segment; that stretch reads TLIHLLKCNIGTGLLGLPLAI. The Extracellular segment spans residues 68–71; it reads KNAG. The chain crosses the membrane as a helical span at residues 72 to 92; sequence LLVGPVSLLAIGVLTVHCMVI. Over 93 to 137 the chain is Cytoplasmic; the sequence is LLNCAQHLSQRLQKTFVNYGEATMYGLETCPNTWLRAHAVWGRYT. A helical membrane pass occupies residues 138 to 158; the sequence is VSFLLVITQLGFCSVYFMFMA. The Extracellular segment spans residues 159–185; that stretch reads DNLQQMVEKAHVTSNICQPREILTLTP. The helical transmembrane segment at 186–206 threads the bilayer; the sequence is ILDIRFYMLIILPFLILLVFI. Over 207–210 the chain is Cytoplasmic; that stretch reads QNLK. The chain crosses the membrane as a helical span at residues 211 to 231; sequence VLSVFSTLANITTLGSMALIF. At 232–252 the chain is on the extracellular side; the sequence is EYIMEGIPYPSNLPLMANWKT. Residues 253 to 273 traverse the membrane as a helical segment; it reads FLLFFGTAIFTFEGVGMVLPL. Topologically, residues 274–284 are cytoplasmic; sequence KNQMKHPQQFS. Residues 285 to 305 traverse the membrane as a helical segment; that stretch reads FVLYLGMSIVIILYILLGTLG. The Extracellular segment spans residues 306–337; that stretch reads YMKFGSDTQASITLNLPNCWLYQSVKLMYSIG. The chain crosses the membrane as a helical span at residues 338-358; it reads IFFTYALQFHVPAEIIIPFAI. Residues 359–367 are Cytoplasmic-facing; sequence SQVSESWAL. The helical transmembrane segment at 368 to 388 threads the bilayer; it reads FVDLSVRSALVCLTCVSAILI. Residues 389–392 lie on the Extracellular side of the membrane; the sequence is PRLD. A helical membrane pass occupies residues 393–413; it reads LVISLVGSVSSSALALIIPAL. Residues 414-425 lie on the Cytoplasmic side of the membrane; it reads LEIVIFYSEDMS. Residues 426-446 form a helical membrane-spanning segment; it reads CVTIAKDIMISIVGLLGCIFG. At 447–470 the chain is on the extracellular side; sequence TYQALYELPQPISHSMANSTGVHA.

The protein belongs to the amino acid/polyamine transporter 2 family. As to expression, specifically expressed in testis.

It is found in the membrane. The chain is Proton-coupled amino acid transporter 3 (SLC36A3) from Homo sapiens (Human).